A 469-amino-acid chain; its full sequence is L-seryl-tRNA(Sec) selenium transferase (469 aa).

At Lys298 the chain carries N6-(pyridoxal phosphate)lysine.

It belongs to the SelA family. Pyridoxal 5'-phosphate serves as cofactor.

The protein resides in the cytoplasm. The enzyme catalyses L-seryl-tRNA(Sec) + selenophosphate + H(+) = L-selenocysteinyl-tRNA(Sec) + phosphate. Its pathway is aminoacyl-tRNA biosynthesis; selenocysteinyl-tRNA(Sec) biosynthesis; selenocysteinyl-tRNA(Sec) from L-seryl-tRNA(Sec) (bacterial route): step 1/1. In terms of biological role, converts seryl-tRNA(Sec) to selenocysteinyl-tRNA(Sec) required for selenoprotein biosynthesis. The polypeptide is L-seryl-tRNA(Sec) selenium transferase (Nitratidesulfovibrio vulgaris (strain ATCC 29579 / DSM 644 / CCUG 34227 / NCIMB 8303 / VKM B-1760 / Hildenborough) (Desulfovibrio vulgaris)).